The sequence spans 34 residues: Potassium channel toxin (34 aa).

3 cysteine pairs are disulfide-bonded: cysteine 6–cysteine 25, cysteine 11–cysteine 29, and cysteine 15–cysteine 31.

Belongs to the short scorpion toxin superfamily. Potassium channel inhibitor family. Alpha-KTx 21 subfamily. Expressed by the venom gland.

Its subcellular location is the secreted. Functionally, toxin that blocks voltage-gated potassium channels (Kv). This is Potassium channel toxin from Tityus metuendus (Scorpion).